The chain runs to 1083 residues: Regulator of the glycerol channel 1 (1083 aa).

2 disordered regions span residues 1–46 and 69–89; these read MSDY…GSSD and LKNE…KENK. The span at 13–31 shows a compositional bias: polar residues; that stretch reads GGISKQPATPGSTRSSSRN. A phosphoserine mark is found at S136, S249, S252, S481, and S537. Residues 495–606 enclose the PH domain; that stretch reads CIRVGYLLKK…DCSLKDSTDS (112 aa). The tract at residues 534 to 582 is disordered; it reads DSKSPRSKNKPVVEQSDISRVNKDGTNAGSHPSSKGTQDPKLTKRRKGL. Residues 549-570 show a composition bias toward polar residues; that stretch reads SDISRVNKDGTNAGSHPSSKGT. Residues S652, S765, and S813 each carry the phosphoserine modification. A phosphothreonine mark is found at T817 and T857. Phosphoserine occurs at positions 866, 879, 918, 966, 969, and 975. Residues 979 to 1083 form a disordered region; sequence EENRTQNCSG…TVPATSASSK (105 aa). Composition is skewed to polar residues over residues 983–992, 1043–1061, and 1071–1083; these read TQNCSGSRKS, LKKT…VSND, and STNT…ASSK. Residues S1059, S1081, and S1082 each carry the phosphoserine modification.

Belongs to the RGC1 family.

The protein resides in the cytoplasm. Functionally, positive regulator of FPS1 glycerol channel required for the glycerol efflux. In Saccharomyces cerevisiae (strain ATCC 204508 / S288c) (Baker's yeast), this protein is Regulator of the glycerol channel 1 (RGC1).